We begin with the raw amino-acid sequence, 242 residues long: MAESALTPLRLAQLRRFAARFALSEPEALSWELLHRALIHPSWSAQEGGEDNDRLEFLGDEILRLLAAEFLYRADPELTVGEMTAVRSVLVSDVALAELAEGYDLGEFLVVGRSASGDERGRITRLADGFEAVIGALYLSTGDLGLIRPWLLPHLAHLAESVMADPTRGNHKSALQELTQKLAAGELPEYRLVDPGPPFRYEVWALGRLWGSGEGPSKKLAQQRAARGAYAALRSAFDTALQ.

Residues Leu-14–Gly-142 enclose the RNase III domain. Glu-56 lines the Mg(2+) pocket. Asp-60 is an active-site residue. Asp-128 and Glu-131 together coordinate Mg(2+). Residue Glu-131 is part of the active site. One can recognise a DRBM domain in the interval Asn-170–Ser-235.

The protein belongs to the ribonuclease III family. Homodimer. The cofactor is Mg(2+).

It is found in the cytoplasm. The enzyme catalyses Endonucleolytic cleavage to 5'-phosphomonoester.. In terms of biological role, digests double-stranded RNA. Involved in the processing of primary rRNA transcript to yield the immediate precursors to the large and small rRNAs (23S and 16S). Processes some mRNAs, and tRNAs when they are encoded in the rRNA operon. Processes pre-crRNA and tracrRNA of type II CRISPR loci if present in the organism. The chain is Ribonuclease 3 from Gloeobacter violaceus (strain ATCC 29082 / PCC 7421).